The primary structure comprises 752 residues: Exocyst complex component EXO84B (752 aa).

Disordered stretches follow at residues 511–532 (QTGQ…NPEQ) and 724–752 (TKGN…HGSY). Basic and acidic residues predominate over residues 515–532 (RTDDLRRPLDRQNRNPEQ). A compositionally biased stretch (low complexity) spans 733-752 (SPTASVSAQSVSSARSHGSY).

Belongs to the EXO84 family. In terms of assembly, the exocyst complex is composed of SEC3, SEC5, SEC6, SEC8, SEC10, EXO70A1 and EXO84B. Interacts with SEC6, SEC10, SEC15B and EXO70A1. Interacts with EXO70B1. Binds directly to B1L.

It localises to the cytoplasm. The protein resides in the cytosol. Its subcellular location is the perinuclear region. It is found in the cytoskeleton. The protein localises to the phragmoplast. It localises to the secreted. The protein resides in the cell wall. Its subcellular location is the cell membrane. Component of the exocyst complex involved in the docking of exocytic vesicles with fusion sites on the plasma membrane during regulated or polarized secretion. Involved in polarized cell growth and organ morphogenesis. During cytokinesis, involved in cell plate initiation, cell plate maturation and formation of new primary cell wall. Probable component of an exocyst subcomplex specifically involved in autophagy-related, Golgi-independent membrane traffic to the vacuole. Regulates autophagosome formation and autophagy-related Golgi-independent import into the vacuole. Mediates ABCG36/PEN3 outer-membrane polarity at the periphery of lateral root cap and root epidermal cells. The polypeptide is Exocyst complex component EXO84B (Arabidopsis thaliana (Mouse-ear cress)).